We begin with the raw amino-acid sequence, 236 residues long: Activating transcription factor of chaperone (236 aa).

Residues 117–185 (HRASQLASPQ…KNAATRYRQK (69 aa)) form a disordered region. Positions 120–137 (SQLASPQHSSSSANASPR) are enriched in low complexity. The span at 162-175 (RPVDDRRSRKKEQN) shows a compositional bias: basic and acidic residues. Residues 165–228 (DDRRSRKKEQ…RYLKALMRDL (64 aa)) enclose the bZIP domain. The tract at residues 167 to 187 (RRSRKKEQNKNAATRYRQKKK) is basic motif. A leucine-zipper region spans residues 193–228 (LLKEEQTLRQRHTELGEKCSDLQREIRYLKALMRDL).

This sequence belongs to the bZIP family. In terms of assembly, binds DNA as a dimer.

Its subcellular location is the nucleus. Transcriptional activator that acts in the unfolded protein response (UPR) pathway. Acts during endoplasmic reticulum (ER) stress by activating UPR target genes via direct binding to the UPR element (UPRE) (5'-GGAACTGGACAGCGTGTCGAAA-3'). Activates expression of ER chaperones ERP72 and PDI. In Bombyx mori (Silk moth), this protein is Activating transcription factor of chaperone.